The chain runs to 704 residues: MGVGEMNKEVIDKVIKFLMMVILMGTIVIWIMMPTSTYKEIWLTSMRAKLGKSIYYGRPGVNLLVYMFPMILLAFLGCIYLHLKKSTTVNQFNSGVEKKRAKFGALRRPMLVNGPLGIVTVTEVMFLTMFMALLLWSLANYMYRTFVNVTSESAATDGNNLWQARLDLIAVRIGIVGNICLAFLFYPVARGSSLLAAVGLTSESSIKYHIWLGHLVMIIFTSHGLCYFIYWISKNQLVSKMLEWDRTAVSNLAGEIALVAGLMMWVTTYPKIRRRLFEVFFYSHYLYIVFMLFFVFHVGISHALIPLPGFYIFLVDRFLRFLQSRNNVKLVSARVLPCDTVELNFSKNPMLMYSPTSTMFVNIPSISKLQWHPFTIISSSKLEPETLSVMIKSQGKWSTKLYDMLSSSSSDQINRLAVSVEGPYGPSSTDFLRHESLVMVSGGSGITPFISIVRDLFYMSSTHKCKIPKMTLICAFKNSSDLSMLDLILPTSGLTTDMASFVDIQIKAFVTREEKTSVKESTHNRNIIKTRHFKPNVSDQPISPILGPNSWLCLAAILSSSFMIFIVIIAIITRYHIHPIDQNSEKYTWAYKSLIYLVSISITVVTTSTAAMLWNKKKYYAKNDQYVDNLSPVIIESSPQQLISQSTDIHYGERPNLNKLLVGLKGSSVGILVCGPKKMRQKVAKICSFGSAENLHFESISFSW.

Over 1–16 the chain is Cytoplasmic; that stretch reads MGVGEMNKEVIDKVIK. Residues 17-36 form a helical membrane-spanning segment; sequence FLMMVILMGTIVIWIMMPTS. Topologically, residues 37 to 62 are lumenal; sequence TYKEIWLTSMRAKLGKSIYYGRPGVN. The chain crosses the membrane as a helical span at residues 63 to 81; that stretch reads LLVYMFPMILLAFLGCIYL. The Cytoplasmic segment spans residues 82-115; sequence HLKKSTTVNQFNSGVEKKRAKFGALRRPMLVNGP. Residues 116–139 form a helical membrane-spanning segment; the sequence is LGIVTVTEVMFLTMFMALLLWSLA. Topologically, residues 140–207 are lumenal; the sequence is NYMYRTFVNV…VGLTSESSIK (68 aa). The region spanning 174–294 is the Ferric oxidoreductase domain; the sequence is GIVGNICLAF…YLYIVFMLFF (121 aa). Residues 208-231 form a helical membrane-spanning segment; sequence YHIWLGHLVMIIFTSHGLCYFIYW. Heme-binding residues include H209 and H223. Residues 232–282 are Cytoplasmic-facing; that stretch reads ISKNQLVSKMLEWDRTAVSNLAGEIALVAGLMMWVTTYPKIRRRLFEVFFY. Residues 283 to 307 form a helical membrane-spanning segment; it reads SHYLYIVFMLFFVFHVGISHALIPL. 2 residues coordinate heme: H284 and H297. At 308–329 the chain is on the lumenal side; sequence PGFYIFLVDRFLRFLQSRNNVK. Residues 323–430 enclose the FAD-binding FR-type domain; it reads QSRNNVKLVS…EGPYGPSSTD (108 aa). A helical transmembrane segment spans residues 330–350; it reads LVSARVLPCDTVELNFSKNPM. The Cytoplasmic segment spans residues 351–550; it reads LMYSPTSTMF…PISPILGPNS (200 aa). 372–375 is an FAD binding site; that stretch reads HPFT. 422 to 425 lines the NAD(+) pocket; sequence GPYG. The chain crosses the membrane as a helical span at residues 551-573; that stretch reads WLCLAAILSSSFMIFIVIIAIIT. Residues 574-592 are Lumenal-facing; it reads RYHIHPIDQNSEKYTWAYK. The chain crosses the membrane as a helical span at residues 593 to 614; it reads SLIYLVSISITVVTTSTAAMLW. Residues 615–704 lie on the Cytoplasmic side of the membrane; it reads NKKKYYAKND…LHFESISFSW (90 aa).

This sequence belongs to the ferric reductase (FRE) family. FAD is required as a cofactor. In terms of tissue distribution, expressed in siliques. Detected in roots.

Its subcellular location is the membrane. It carries out the reaction 2 a Fe(II)-siderophore + NAD(+) + H(+) = 2 a Fe(III)-siderophore + NADH. In terms of biological role, ferric chelate reductase involved in iron reduction in roots. May participate in the transport of electrons to a Fe(3+) ion via FAD and heme intermediates. The polypeptide is Probable ferric reduction oxidase 1 (FRO1) (Arabidopsis thaliana (Mouse-ear cress)).